We begin with the raw amino-acid sequence, 288 residues long: Prohibitin-2 (288 aa).

The chain crosses the membrane as a helical; Signal-anchor for type II membrane protein span at residues 21-43 (GKYAFTGTGLLLALGLAGFAVQT). Residues 125 to 128 (YRTL) carry the AIM motif.

This sequence belongs to the prohibitin family. In terms of assembly, the mitochondrial prohibitin complex consists of two subunits (phb1 and phb2). The subunits assemble into a membrane-associated ring-shaped supercomplex of approximately 1 mDa.

Its subcellular location is the mitochondrion inner membrane. In terms of biological role, prohibitin probably acts as a holdase/unfoldase for the stabilization of newly synthesized mitochondrial proteins. Involved in mitophagy; may act as an adapter for atg8 that supports mitophagosome assembly. Negatively regulates the proteolytic processing of atg32 via the i-AAA protease. Acts as a negative regulator of the m-AAA protease. This is Prohibitin-2 (phb2) from Schizosaccharomyces pombe (strain 972 / ATCC 24843) (Fission yeast).